The primary structure comprises 484 residues: Glutamyl-tRNA(Gln) amidotransferase subunit A (484 aa).

Active-site charge relay system residues include K76 and S151. The active-site Acyl-ester intermediate is the S175.

It belongs to the amidase family. GatA subfamily. In terms of assembly, heterotrimer of A, B and C subunits.

It catalyses the reaction L-glutamyl-tRNA(Gln) + L-glutamine + ATP + H2O = L-glutaminyl-tRNA(Gln) + L-glutamate + ADP + phosphate + H(+). Functionally, allows the formation of correctly charged Gln-tRNA(Gln) through the transamidation of misacylated Glu-tRNA(Gln) in organisms which lack glutaminyl-tRNA synthetase. The reaction takes place in the presence of glutamine and ATP through an activated gamma-phospho-Glu-tRNA(Gln). In Halorhodospira halophila (strain DSM 244 / SL1) (Ectothiorhodospira halophila (strain DSM 244 / SL1)), this protein is Glutamyl-tRNA(Gln) amidotransferase subunit A.